An 89-amino-acid chain; its full sequence is Small ribosomal subunit protein uS15 (89 aa).

The protein belongs to the universal ribosomal protein uS15 family. In terms of assembly, part of the 30S ribosomal subunit. Forms a bridge to the 50S subunit in the 70S ribosome, contacting the 23S rRNA.

Its function is as follows. One of the primary rRNA binding proteins, it binds directly to 16S rRNA where it helps nucleate assembly of the platform of the 30S subunit by binding and bridging several RNA helices of the 16S rRNA. In terms of biological role, forms an intersubunit bridge (bridge B4) with the 23S rRNA of the 50S subunit in the ribosome. The sequence is that of Small ribosomal subunit protein uS15 from Buchnera aphidicola subsp. Schizaphis graminum (strain Sg).